Consider the following 388-residue polypeptide: Phosphoribosylformylglycinamidine cyclo-ligase, chloroplastic/mitochondrial (388 aa).

It belongs to the AIR synthase family.

It is found in the plastid. The protein resides in the chloroplast. The protein localises to the mitochondrion. It carries out the reaction 2-formamido-N(1)-(5-O-phospho-beta-D-ribosyl)acetamidine + ATP = 5-amino-1-(5-phospho-beta-D-ribosyl)imidazole + ADP + phosphate + H(+). It participates in purine metabolism; IMP biosynthesis via de novo pathway; 5-amino-1-(5-phospho-D-ribosyl)imidazole from N(2)-formyl-N(1)-(5-phospho-D-ribosyl)glycinamide: step 2/2. The protein is Phosphoribosylformylglycinamidine cyclo-ligase, chloroplastic/mitochondrial (PUR5) of Vigna unguiculata (Cowpea).